The sequence spans 114 residues: Large ribosomal subunit protein bL19 (114 aa).

This sequence belongs to the bacterial ribosomal protein bL19 family.

Functionally, this protein is located at the 30S-50S ribosomal subunit interface and may play a role in the structure and function of the aminoacyl-tRNA binding site. This is Large ribosomal subunit protein bL19 from Bacillus mycoides (strain KBAB4) (Bacillus weihenstephanensis).